We begin with the raw amino-acid sequence, 635 residues long: 1-deoxy-D-xylulose-5-phosphate synthase (635 aa).

Residues H73 and 114–116 (SHA) contribute to the thiamine diphosphate site. D146 provides a ligand contact to Mg(2+). Residues 147-148 (GA), N176, Y287, and E368 each bind thiamine diphosphate. Position 176 (N176) interacts with Mg(2+).

Belongs to the transketolase family. DXPS subfamily. Homodimer. Requires Mg(2+) as cofactor. Thiamine diphosphate is required as a cofactor.

The catalysed reaction is D-glyceraldehyde 3-phosphate + pyruvate + H(+) = 1-deoxy-D-xylulose 5-phosphate + CO2. Its pathway is metabolic intermediate biosynthesis; 1-deoxy-D-xylulose 5-phosphate biosynthesis; 1-deoxy-D-xylulose 5-phosphate from D-glyceraldehyde 3-phosphate and pyruvate: step 1/1. Catalyzes the acyloin condensation reaction between C atoms 2 and 3 of pyruvate and glyceraldehyde 3-phosphate to yield 1-deoxy-D-xylulose-5-phosphate (DXP). The sequence is that of 1-deoxy-D-xylulose-5-phosphate synthase from Corynebacterium diphtheriae (strain ATCC 700971 / NCTC 13129 / Biotype gravis).